We begin with the raw amino-acid sequence, 344 residues long: Dihydroorotate dehydrogenase (quinone) (344 aa).

FMN is bound by residues 65–69 (AGLDK) and Thr-89. Lys-69 serves as a coordination point for substrate. Residue 114–118 (NRMGF) participates in substrate binding. FMN-binding residues include Asn-142 and Asn-175. Residue Asn-175 participates in substrate binding. Ser-178 serves as the catalytic Nucleophile. Asn-180 serves as a coordination point for substrate. FMN is bound by residues Lys-220 and Thr-248. 249-250 (NT) is a substrate binding site. FMN contacts are provided by residues Gly-271, Gly-300, and 321 to 322 (YT).

The protein belongs to the dihydroorotate dehydrogenase family. Type 2 subfamily. Monomer. The cofactor is FMN.

It is found in the cell membrane. The catalysed reaction is (S)-dihydroorotate + a quinone = orotate + a quinol. It functions in the pathway pyrimidine metabolism; UMP biosynthesis via de novo pathway; orotate from (S)-dihydroorotate (quinone route): step 1/1. Catalyzes the conversion of dihydroorotate to orotate with quinone as electron acceptor. This is Dihydroorotate dehydrogenase (quinone) from Paraburkholderia phymatum (strain DSM 17167 / CIP 108236 / LMG 21445 / STM815) (Burkholderia phymatum).